A 289-amino-acid polypeptide reads, in one-letter code: Complement C1q tumor necrosis factor-related protein 7 (289 aa).

A signal peptide spans 1 to 16 (MIVLLYVTSLAICASG). The interval 36–134 (IPGLPGPPGP…GDRGDQGDPG (99 aa)) is disordered. In terms of domain architecture, Collagen-like spans 38-139 (GLPGPPGPPG…QGDPGLPGVC (102 aa)). Residues 48 to 61 (ANGSPGPHGRIGLP) are compositionally biased toward low complexity. The segment covering 63-76 (RDGRDGRKGEKGEK) has biased composition (basic and acidic residues). The segment covering 78 to 91 (TAGLKGKTGPLGLA) has biased composition (low complexity). Positions 93–102 (EKGDQGETGK) are enriched in basic and acidic residues. Residues 143–279 (SIVLKSAFSV…GFLLYVDTDY (137 aa)) enclose the C1q domain.

It localises to the secreted. In Mus musculus (Mouse), this protein is Complement C1q tumor necrosis factor-related protein 7 (C1qtnf7).